We begin with the raw amino-acid sequence, 147 residues long: Siroheme decarboxylase NirG subunit (147 aa).

The protein belongs to the Ahb/Nir family. Probably forms a complex composed of NirD, NirL, NirG and NirH. All proteins are required for the total conversion of siroheme to didecarboxysiroheme.

The catalysed reaction is siroheme + 2 H(+) = 12,18-didecarboxysiroheme + 2 CO2. Its pathway is porphyrin-containing compound metabolism. In terms of biological role, involved in heme d1 biosynthesis. Catalyzes the decarboxylation of siroheme into didecarboxysiroheme. This is Siroheme decarboxylase NirG subunit from Pseudomonas aeruginosa (strain ATCC 15692 / DSM 22644 / CIP 104116 / JCM 14847 / LMG 12228 / 1C / PRS 101 / PAO1).